The sequence spans 278 residues: Shikimate dehydrogenase (NADP(+)) (278 aa).

Shikimate-binding positions include 19 to 21 (SFS) and threonine 66. Catalysis depends on lysine 70, which acts as the Proton acceptor. The shikimate site is built by asparagine 91 and aspartate 106. Residues 130-134 (GSGGA) and leucine 222 each bind NADP(+). Position 224 (tyrosine 224) interacts with shikimate. Glycine 245 contributes to the NADP(+) binding site.

This sequence belongs to the shikimate dehydrogenase family. In terms of assembly, homodimer.

The catalysed reaction is shikimate + NADP(+) = 3-dehydroshikimate + NADPH + H(+). Its pathway is metabolic intermediate biosynthesis; chorismate biosynthesis; chorismate from D-erythrose 4-phosphate and phosphoenolpyruvate: step 4/7. Involved in the biosynthesis of the chorismate, which leads to the biosynthesis of aromatic amino acids. Catalyzes the reversible NADPH linked reduction of 3-dehydroshikimate (DHSA) to yield shikimate (SA). This is Shikimate dehydrogenase (NADP(+)) from Methanococcus maripaludis (strain DSM 14266 / JCM 13030 / NBRC 101832 / S2 / LL).